Reading from the N-terminus, the 363-residue chain is Pyrimidine monooxygenase RutA (363 aa).

FMN-binding positions include 49–50 (IK), N115, E124, 140–141 (RY), and S190.

Belongs to the NtaA/SnaA/DszA monooxygenase family. RutA subfamily.

The catalysed reaction is uracil + FMNH2 + NADH + O2 = (Z)-3-ureidoacrylate + FMN + NAD(+) + H2O + H(+). The enzyme catalyses thymine + FMNH2 + NADH + O2 = (Z)-2-methylureidoacrylate + FMN + NAD(+) + H2O + H(+). Catalyzes the pyrimidine ring opening between N-3 and C-4 by an unusual flavin hydroperoxide-catalyzed mechanism, adding oxygen atoms in the process to yield ureidoacrylate peracid, that immediately reacts with FMN forming ureidoacrylate and FMN-N(5)-oxide. The FMN-N(5)-oxide reacts spontaneously with NADH to produce FMN. Requires the flavin reductase RutF to regenerate FMN in vivo. In Enterobacter cloacae subsp. cloacae (strain ATCC 13047 / DSM 30054 / NBRC 13535 / NCTC 10005 / WDCM 00083 / NCDC 279-56), this protein is Pyrimidine monooxygenase RutA.